The sequence spans 474 residues: Replication factor C large subunit (474 aa).

45–52 contributes to the ATP binding site; that stretch reads GPPGCGKT. A compositionally biased stretch (basic and acidic residues) spans 415–468; that stretch reads DKKTNNKKGKENKTKNTTKKIKEIKETPKKEEVKEPKKQIEKQKSEKKEPKKQM. The tract at residues 415 to 474 is disordered; that stretch reads DKKTNNKKGKENKTKNTTKKIKEIKETPKKEEVKEPKKQIEKQKSEKKEPKKQMTLESFF.

The protein belongs to the activator 1 small subunits family. RfcL subfamily. In terms of assembly, heteromultimer composed of small subunits (RfcS) and large subunits (RfcL).

Functionally, part of the RFC clamp loader complex which loads the PCNA sliding clamp onto DNA. The polypeptide is Replication factor C large subunit (Methanococcus aeolicus (strain ATCC BAA-1280 / DSM 17508 / OCM 812 / Nankai-3)).